The primary structure comprises 117 residues: Probable non-functional T cell receptor gamma variable (117 aa).

Residues 1 to 20 (MRWALAVLLAFLSPASQISS) form the signal peptide. One can recognise an Ig-like domain in the interval 21-117 (NLEGRTKSVT…GFYYCATWDR (97 aa)). An intrachain disulfide couples Cys-41 to Cys-112. Asn-105 carries an N-linked (GlcNAc...) asparagine glycan.

As to quaternary structure, gamma-delta TR is a heterodimer composed of a gamma and delta chain; disulfide-linked. The gamma-delta TR is associated with the transmembrane signaling CD3 coreceptor proteins following the stoichiometry: a single gamma-delta TR heterodimer associates with one CD3D-CD3E heterodimer, one CD3G-CD3E heterodimer and one CD247 homodimer forming a stable octameric structure. Upon activation, gamma-delta TR complex associates with FCER1G to initiate intracellular signaling.

It localises to the cell membrane. Functionally, probable non-functional open reading frame (ORF) of V region of the variable domain of T cell receptor (TR) gamma chain. Non-functional ORF generally cannot participate in the synthesis of a productive T cell receptor (TR) chain due to altered V-(D)-J or switch recombination and/or splicing site (at mRNA level) and/or conserved amino acid change (protein level). Gamma-delta TRs recognize a variety of self and foreign non-peptide antigens frequently expressed at the epithelial boundaries between the host and external environment, including endogenous lipids presented by MH-like protein CD1D and phosphoantigens presented by butyrophilin-like molecule BTN3A1. Upon antigen recognition induces rapid, innate-like immune responses involved in pathogen clearance and tissue repair. Binding of gamma-delta TR complex to antigen triggers phosphorylation of immunoreceptor tyrosine-based activation motifs (ITAMs) in the CD3 chains by the LCK and FYN kinases, allowing the recruitment, phosphorylation, and activation of ZAP70 that facilitates phosphorylation of the scaffolding proteins LCP2 and LAT. This lead to the formation of a supramolecular signalosome that recruits the phospholipase PLCG1, resulting in calcium mobilization and ERK activation, ultimately leading to T cell expansion and differentiation into effector cells. Gamma-delta TRs are produced through somatic rearrangement of a limited repertoire of variable (V), diversity (D), and joining (J) genes. The potential diversity of gamma-delta TRs is conferred by the unique ability to rearrange (D) genes in tandem and to utilize all three reading frames. The combinatorial diversity is considerably increased by the sequence exonuclease trimming and random nucleotide (N) region additions which occur during the V-(D)-J rearrangements. In Homo sapiens (Human), this protein is Probable non-functional T cell receptor gamma variable.